The chain runs to 111 residues: Large ribosomal subunit protein uL23 (111 aa).

This sequence belongs to the universal ribosomal protein uL23 family. As to quaternary structure, part of the 50S ribosomal subunit. Contacts protein L29, and trigger factor when it is bound to the ribosome.

Functionally, one of the early assembly proteins it binds 23S rRNA. One of the proteins that surrounds the polypeptide exit tunnel on the outside of the ribosome. Forms the main docking site for trigger factor binding to the ribosome. The polypeptide is Large ribosomal subunit protein uL23 (Chlamydia trachomatis serovar A (strain ATCC VR-571B / DSM 19440 / HAR-13)).